Consider the following 358-residue polypeptide: MEKVLIWFCGTGTTKQDFLANVEISGFSAIVAIDGIGTAAMLTKTQALAKRANWGGSFVDMSETLGVLYDQVNGYDDRAGVVTLDSLFPLVDYLKTLKEYQLVVGGHSRGAAVGLTEFLAELYHLAVQNQAPGVWANAKTIRLVVVDPVQGQQDADKDTNAFNAILKDKTLAQILAELETKWFGGREVFDTLVYSARYDARSSFAFDSRWYRFITEQMGKQAGPAKRAKLVMAGFRHSAPVSKEDEISALYQGKGVAPIAFLQQLVSFDPNWEQSARLLSQIENGYLDQLAAGAKTDLISQLDKQTSLLSTALPALSAANRCKKRCRRITRKNRNTAGSTAISTGRRRFNASYQVTSD.

Its subcellular location is the secreted. The sequence is that of Extracellular phospholipase C (plcA) from Dickeya chrysanthemi (Pectobacterium chrysanthemi).